Here is a 198-residue protein sequence, read N- to C-terminus: Holliday junction resolvase RecU (198 aa).

Mg(2+)-binding residues include T83, D85, E98, and Q117.

The protein belongs to the RecU family. Mg(2+) serves as cofactor.

The protein localises to the cytoplasm. It carries out the reaction Endonucleolytic cleavage at a junction such as a reciprocal single-stranded crossover between two homologous DNA duplexes (Holliday junction).. In terms of biological role, endonuclease that resolves Holliday junction intermediates in genetic recombination. Cleaves mobile four-strand junctions by introducing symmetrical nicks in paired strands. Promotes annealing of linear ssDNA with homologous dsDNA. Required for DNA repair, homologous recombination and chromosome segregation. The polypeptide is Holliday junction resolvase RecU (Streptococcus thermophilus (strain CNRZ 1066)).